Consider the following 266-residue polypeptide: Apolipoprotein A-I (266 aa).

Positions 1–18 are cleaved as a signal peptide; it reads MKAVVLTLAVLFLTGSQA. 2 tandem repeats follow at residues 67–88 and 89–110. The segment at 67–266 is 10 X approximate tandem repeats; the sequence is LKLLDNWDSL…DEAAKKLNAQ (200 aa). Met-109 is modified (methionine sulfoxide). The 3; half-length repeat unit spans residues 111 to 121; it reads KDLEEVKQKVQ. Tandem repeats lie at residues 122-142, 144-165, 166-187, 188-210, and 211-231. A 9; half-length repeat occupies 232-242; the sequence is PALEDLRQGLL. Repeat 10 spans residues 243–266; the sequence is PVLESFKVSLLAAVDEAAKKLNAQ.

The protein belongs to the apolipoprotein A1/A4/E family. As to quaternary structure, homodimer. Interacts with APOA1BP and CLU. Component of a sperm activating protein complex (SPAP), consisting of APOA1, an immunoglobulin heavy chain, an immunoglobulin light chain and albumin. Interacts with NDRG1. Interacts with SCGB3A2. Interacts with NAXE and YJEFN3. In terms of processing, glycosylated. Post-translationally, palmitoylated. Phosphorylation sites are present in the extracellular medium. As to expression, major protein of plasma HDL, also found in chylomicrons.

The protein localises to the secreted. Functionally, participates in the reverse transport of cholesterol from tissues to the liver for excretion by promoting cholesterol efflux from tissues and by acting as a cofactor for the lecithin cholesterol acyltransferase (LCAT). As part of the SPAP complex, activates spermatozoa motility. The protein is Apolipoprotein A-I (APOA1) of Ailuropoda melanoleuca (Giant panda).